Reading from the N-terminus, the 76-residue chain is ATP synthase subunit c (76 aa).

The next 2 helical transmembrane spans lie at 13–33 (LSVI…GILF) and 55–75 (FIGL…ALII).

This sequence belongs to the ATPase C chain family. F-type ATPases have 2 components, F(1) - the catalytic core - and F(0) - the membrane proton channel. F(1) has five subunits: alpha(3), beta(3), gamma(1), delta(1), epsilon(1). F(0) has three main subunits: a(1), b(2) and c(10-14). The alpha and beta chains form an alternating ring which encloses part of the gamma chain. F(1) is attached to F(0) by a central stalk formed by the gamma and epsilon chains, while a peripheral stalk is formed by the delta and b chains.

It is found in the cell membrane. Its function is as follows. F(1)F(0) ATP synthase produces ATP from ADP in the presence of a proton or sodium gradient. F-type ATPases consist of two structural domains, F(1) containing the extramembraneous catalytic core and F(0) containing the membrane proton channel, linked together by a central stalk and a peripheral stalk. During catalysis, ATP synthesis in the catalytic domain of F(1) is coupled via a rotary mechanism of the central stalk subunits to proton translocation. Key component of the F(0) channel; it plays a direct role in translocation across the membrane. A homomeric c-ring of between 10-14 subunits forms the central stalk rotor element with the F(1) delta and epsilon subunits. This is ATP synthase subunit c from Bifidobacterium longum subsp. infantis (strain ATCC 15697 / DSM 20088 / JCM 1222 / NCTC 11817 / S12).